The following is a 487-amino-acid chain: Recombining binding protein suppressor of hairless (487 aa).

2 DNA-binding regions span residues 44-54 (QKSYGNEKRFF) and 152-157 (SKPSKK). Lys162 is modified (N6-acetyllysine). Residues 179 to 184 (RLRSQT) form a DNA-binding region. The region spanning 342–432 (PVVESLQLNG…YSTSLTFTYT (91 aa)) is the IPT/TIG domain. Polar residues predominate over residues 452–468 (SSQVPPNESNTNSEGSY). The segment at 452-487 (SSQVPPNESNTNSEGSYTNVSTNSTSVTSSTATVVS) is disordered. Residues 469–487 (TNVSTNSTSVTSSTATVVS) are compositionally biased toward low complexity.

The protein belongs to the Su(H) family. In terms of assembly, interacts with activated NOTCH1, NOTCH2 or NOTCH3. Interacts with MINT/SHARP. This interaction may mediate the recruitment of large corepressor complexes containing proteins such as HDAC1, HDAC2, NCOR2, SAP30, FHL1/KYOT2 and CIR1. Interacts with EP300, MAML1 and PTF1A. Interacts with RITA1, leading to nuclear export, prevent the interaction between RBPJ and NICD product and subsequent down-regulation of the Notch signaling pathway. Interacts with SNW1. Interacts with CHCHD2 and CXXC5. Interacts with BEND6 (via BEN domain). Interacts with NKAPL. Interacts with ZMIZ1. Interacts with RBM15. Interacts with L3MBTL3 and KDM1A; the interaction with KDM1A is weaker in the absence of L3MBTL3 and the interaction with L3MBTL3 is impaired by Notch-derived peptides containing the intracellular domain (NICD).

It is found in the nucleus. The protein localises to the cytoplasm. Its function is as follows. Transcriptional regulator that plays a central role in Notch signaling, a signaling pathway involved in cell-cell communication that regulates a broad spectrum of cell-fate determinations. Acts as a transcriptional repressor when it is not associated with Notch proteins. When associated with some NICD product of Notch proteins (Notch intracellular domain), it acts as a transcriptional activator that activates transcription of Notch target genes. Probably represses or activates transcription via the recruitment of chromatin remodeling complexes containing histone deacetylase or histone acetylase proteins, respectively. Specifically binds to the immunoglobulin kappa-type J segment recombination signal sequence. Binds specifically to methylated DNA. Binds to the oxygen responsive element of COX4I2 and activates its transcription under hypoxia conditions (4% oxygen). Negatively regulates the phagocyte oxidative burst in response to bacterial infection by repressing transcription of NADPH oxidase subunits. The sequence is that of Recombining binding protein suppressor of hairless (RBPJ) from Bos taurus (Bovine).